Here is a 292-residue protein sequence, read N- to C-terminus: Tetrahydromethanopterin:alpha-L-glutamate ligase (292 aa).

One can recognise an ATP-grasp domain in the interval 103-286 (SFLMEVHKIP…IAQNLIDEAL (184 aa)). ATP contacts are provided by residues Lys138, 176 to 188 (QEFV…VYRD), and Arg204. Asp247, Glu259, and Asn261 together coordinate Mg(2+). Mn(2+) contacts are provided by Asp247, Glu259, and Asn261.

Belongs to the RimK family. MptN subfamily. Homodimer. Requires Mg(2+) as cofactor. Mn(2+) serves as cofactor.

It carries out the reaction 5,6,7,8-tetrahydromethanopterin + L-glutamate + ATP = 5,6,7,8-tetrahydrosarcinapterin + ADP + phosphate + H(+). It functions in the pathway cofactor biosynthesis; 5,6,7,8-tetrahydrosarcinapterin biosynthesis. Its function is as follows. Catalyzes the ATP or GTP-dependent addition of one L-glutamate molecule to tetrahydromethanopterin, producing tetrahydrosarcinapterin. The protein is Tetrahydromethanopterin:alpha-L-glutamate ligase (mptN) of Methanococcus maripaludis (strain DSM 14266 / JCM 13030 / NBRC 101832 / S2 / LL).